The following is a 636-amino-acid chain: Chaperone protein HtpG (636 aa).

An a; substrate-binding region spans residues 1 to 342 (MSGETLEFQA…AHDLSLNISR (342 aa)). Positions 343–558 (ELLQQDRQIQ…AHDVTPTLEK (216 aa)) are b. Positions 559-636 (MYRAMGHEVP…ILAERLARTL (78 aa)) are c.

It belongs to the heat shock protein 90 family. Homodimer.

The protein resides in the cytoplasm. Molecular chaperone. Has ATPase activity. This is Chaperone protein HtpG from Salinispora arenicola (strain CNS-205).